The following is a 257-amino-acid chain: Thiazole synthase (257 aa).

The active-site Schiff-base intermediate with DXP is Lys99. 1-deoxy-D-xylulose 5-phosphate contacts are provided by residues Gly160, 186-187 (AG), and 208-209 (NT).

This sequence belongs to the ThiG family. In terms of assembly, homotetramer. Forms heterodimers with either ThiH or ThiS.

Its subcellular location is the cytoplasm. It carries out the reaction [ThiS sulfur-carrier protein]-C-terminal-Gly-aminoethanethioate + 2-iminoacetate + 1-deoxy-D-xylulose 5-phosphate = [ThiS sulfur-carrier protein]-C-terminal Gly-Gly + 2-[(2R,5Z)-2-carboxy-4-methylthiazol-5(2H)-ylidene]ethyl phosphate + 2 H2O + H(+). It functions in the pathway cofactor biosynthesis; thiamine diphosphate biosynthesis. Functionally, catalyzes the rearrangement of 1-deoxy-D-xylulose 5-phosphate (DXP) to produce the thiazole phosphate moiety of thiamine. Sulfur is provided by the thiocarboxylate moiety of the carrier protein ThiS. In vitro, sulfur can be provided by H(2)S. This chain is Thiazole synthase, found in Thermodesulfovibrio yellowstonii (strain ATCC 51303 / DSM 11347 / YP87).